The primary structure comprises 286 residues: Prepilin leader peptidase/N-methyltransferase (286 aa).

A helical transmembrane segment spans residues 10–30 (FAVPLAAVLGLLVGSFLNVVI). The Zn(2+) site is built by C70, C73, C95, and C98. A run of 6 helical transmembrane segments spans residues 102–122 (ISIRYPLIELLTGVLFGLVAW), 126–146 (WSWITLGGLILTAFLISLTFI), 157–177 (MTLPLIWLGLIFNLDGGFVPL), 181–201 (VLGAVAGYSSLWLLCAVYKLL), 224–244 (ISALPVLIFVSSLIGLVAAIV), and 250–270 (GRHFAFGPALTVSGWIIFTAN).

The protein belongs to the peptidase A24 family. It depends on Zn(2+) as a cofactor.

Its subcellular location is the cell inner membrane. The enzyme catalyses Typically cleaves a -Gly-|-Phe- bond to release an N-terminal, basic peptide of 5-8 residues from type IV prepilin, and then N-methylates the new N-terminal amino group, the methyl donor being S-adenosyl-L-methionine.. In terms of biological role, plays an essential role in type IV pili and type II pseudopili formation by proteolytically removing the leader sequence from substrate proteins and subsequently monomethylating the alpha-amino group of the newly exposed N-terminal phenylalanine. The sequence is that of Prepilin leader peptidase/N-methyltransferase (pilD) from Neisseria gonorrhoeae.